We begin with the raw amino-acid sequence, 964 residues long: Coatomer subunit beta (964 aa).

HEAT repeat units follow at residues 129–166 (ELLEPLMPAIRACLDHRHSYVRRNAVLAIFTIYKNFDW), 238–275 (AERSRFIRCIYNLLNSSSNAVRYESAGTLITLSLAPTA), 314–351 (KVMQDLVMDVLRVLAAPDIEVRRKTLALALDLVYSRNI), 393–430 (DVAANVIPVLVEFLSDTNELAAADVLIFIREAIQKFPA), and 466–506 (SQIL…QQGS). The segment covering 490 to 501 (RRLAGDQTEEQK) has biased composition (basic and acidic residues). The tract at residues 490 to 530 (RRLAGDQTEEQKQQQGSAGGNAAGSAAEGSGSGNASNKVTS) is disordered. Low complexity predominate over residues 512–526 (AGSAAEGSGSGNASN).

Oligomeric complex that consists of at least the alpha, beta, beta', gamma, delta, epsilon and zeta subunits. As to expression, during oogenesis and spermatogenesis, expressed in ovariole, germarium, testis tip and testis.

It is found in the cytoplasm. Its subcellular location is the golgi apparatus membrane. The protein resides in the cytoplasmic vesicle. The protein localises to the COPI-coated vesicle membrane. Functionally, the coatomer is a cytosolic protein complex that binds to dilysine motifs and reversibly associates with Golgi non-clathrin-coated vesicles, which further mediate biosynthetic protein transport from the ER, via the Golgi up to the trans Golgi network. Coatomer complex is required for budding from Golgi membranes, and is essential for the retrograde Golgi-to-ER transport of dilysine-tagged proteins. Required for limiting lipid storage in lipid droplets. The chain is Coatomer subunit beta from Drosophila melanogaster (Fruit fly).